An 803-amino-acid chain; its full sequence is MDFPQHSQHVLEQLNQQRQLGLLCDCTFVVDGVHFKAHKAVLAACSEYFKMLFVDQKDVVHLDISNAAGLGQVLEFMYTAKLSLSPENVDDVLAVATFLQMQDIITACHALKSLAEPATSPGGNAEALATEGGDKRAKEEKVATSTLSRLEQAGRSTPIGPSRDLKEERGGQAQSAASGAEQTEKADAPREPPPVELKPDPTSGMAAAEAEAALSESSEQEMEVEPARKGEEEQKEQEEQEEEGAGPAEVKEEGSQLENGEAPEENENEESAGTDSGQELGSEARGLRSGTYGDRTESKAYGSVIHKCEDCGKEFTHTGNFKRHIRIHTGEKPFSCRECSKAFSDPAACKAHEKTHSPLKPYGCEECGKSYRLISLLNLHKKRHSGEARYRCEDCGKLFTTSGNLKRHQLVHSGEKPYQCDYCGRSFSDPTSKMRHLETHDTDKEHKCPHCDKKFNQVGNLKAHLKIHIADGPLKCRECGKQFTTSGNLKRHLRIHSGEKPYVCIHCQRQFADPGALQRHVRIHTGEKPCQCVMCGKAFTQASSLIAHVRQHTGEKPYVCERCGKRFVQSSQLANHIRHHDNIRPHKCSVCSKAFVNVGDLSKHIIIHTGEKPYLCDKCGRGFNRVDNLRSHVKTVHQGKAGIKILEPEEGSEVSVVTVDDMVTLATEALAATAVTQLTVVPVGAAVTADETEVLKAEISKAVKQVQEEDPNTHILYACDSCGDKFLDANSLAQHVRIHTAQALVMFQTDADFYQQYGPGGTWPAGQVLQAGELVFRPRDGAEGQPALAETSPTAPECPPPAE.

Residues 1-104 (MDFPQHSQHV…VATFLQMQDI (104 aa)) form the BTB domain. The interval 116–295 (EPATSPGGNA…GLRSGTYGDR (180 aa)) is disordered. Serine 120 bears the Phosphoserine mark. Basic and acidic residues predominate over residues 132–142 (GGDKRAKEEKV). Low complexity-rich tracts occupy residues 171 to 180 (GQAQSAASGA) and 206 to 217 (AAAEAEAALSES). Acidic residues-rich tracts occupy residues 233–244 (EQKEQEEQEEEG) and 261–272 (EAPEENENEESA). The interval 269-308 (EESAGTDSGQELGSEARGLRSGTYGDRTESKAYGSVIHKC) is interaction with MYC. C2H2-type zinc fingers lie at residues 306 to 328 (HKCEDCGKEFTHTGNFKRHIRIH), 334 to 356 (FSCRECSKAFSDPAACKAHEKTH), 362 to 384 (YGCEECGKSYRLISLLNLHKKRH), 390 to 412 (YRCEDCGKLFTTSGNLKRHQLVH), 418 to 440 (YQCDYCGRSFSDPTSKMRHLETH), 446 to 468 (HKCPHCDKKFNQVGNLKAHLKIH), 474 to 496 (LKCRECGKQFTTSGNLKRHLRIH), 502 to 524 (YVCIHCQRQFADPGALQRHVRIH), 530 to 552 (CQCVMCGKAFTQASSLIAHVRQH), 558 to 580 (YVCERCGKRFVQSSQLANHIRHH), 586 to 608 (HKCSVCSKAFVNVGDLSKHIIIH), 614 to 637 (YLCDKCGRGFNRVDNLRSHVKTVH), and 717 to 739 (YACDSCGDKFLDANSLAQHVRIH). Lysine 397 participates in a covalent cross-link: Glycyl lysine isopeptide (Lys-Gly) (interchain with G-Cter in ubiquitin). Lysine 481 participates in a covalent cross-link: Glycyl lysine isopeptide (Lys-Gly) (interchain with G-Cter in ubiquitin). The interval 637–718 (HQGKAGIKIL…EDPNTHILYA (82 aa)) is interaction with MYC. An interaction with HCFC1 region spans residues 637–803 (HQGKAGIKIL…TAPECPPPAE (167 aa)). Residues 779-803 (RDGAEGQPALAETSPTAPECPPPAE) form a disordered region.

Belongs to the krueppel C2H2-type zinc-finger protein family. In terms of assembly, homooligomerizes (via the BTB/POZ domain), multimerization is required for DNA binding. Interacts (via the C-terminal zinc fingers) with GIF1; the interaction results in the recruitment of MYB to the CDKN1A/p21 and CDKN1B promoters and repression of transcription. Interacts with TRAF2, interfering with the binding of UBC13 to TRAF2, and inhibiting TRAF2 E3 ligase activity. Interacts with MYC (via the C-terminal helix-loop-helix motif); the interaction inhibits ZBTB17 transactivation and growth arrest activities and renders it insoluble in the nucleus. Also interacts with HCFC1, MAGEA4 and TMPRSS11A. Interacts with BCL6; the interaction inhibits ZBTB17 transactivation activity on target genes involved in cell cycle arrest. Interacts with ZBTB49 isoform 3/ZNF509S1; this interaction blocks ZBTB17-mediated repression of RB1. Undergoes 'Lys-48'-linked polyubiquitination at Lys-397 and Lys-481 and subsequent proteasomal degradation in a TRAF2-dependent manner. Expressed in germinal center B-cells.

Its subcellular location is the nucleus. Functionally, transcription factor that can function as an activator or repressor depending on its binding partners, and by targeting negative regulators of cell cycle progression. Plays a critical role in early lymphocyte development, where it is essential to prevent apoptosis in lymphoid precursors, allowing them to survive in response to IL7 and undergo proper lineage commitment. Has been shown to bind to the promoters of adenovirus major late protein and cyclin D1 and activate transcription. Required for early embryonic development during gastrulation. Represses RB1 transcription; this repression can be blocked by interaction with ZBTB49 isoform 3/ZNF509S1. The polypeptide is Zinc finger and BTB domain-containing protein 17 (ZBTB17) (Homo sapiens (Human)).